Reading from the N-terminus, the 398-residue chain is uncharacterized protein (398 aa).

Residues 313 to 398 (KTIKSSGSKT…TSKSIKYYEV (86 aa)) form a disordered region. 2 stretches are compositionally biased toward low complexity: residues 314–333 (TIKSSGSKTSKSIGSKTNKS) and 343–398 (GSKT…YYEV).

This is an uncharacterized protein from Acanthamoeba polyphaga mimivirus (APMV).